Consider the following 642-residue polypeptide: uncharacterized protein (642 aa).

Residues 1 to 15 (MVHITLGQAIWVSVK) lie on the Cytoplasmic side of the membrane. Residues 16–36 (PIIKIYLIIGVGFLMAKMGIL) traverse the membrane as a helical segment. The Extracellular portion of the chain corresponds to 37-42 (TVEATR). Residues 43–63 (IISDIVLTVLLPSLSFNKIVA) traverse the membrane as a helical segment. Topologically, residues 64 to 73 (NIEDKDIKSV) are cytoplasmic. A helical transmembrane segment spans residues 74–94 (GIICLSALLIFGSGFFFAYVV). The Extracellular portion of the chain corresponds to 95-104 (RLFLPVPKQW). The helical transmembrane segment at 105 to 125 (YGGILAGGMFPNISDLPIAYL) threads the bilayer. Over 126–142 (QSMDQGLVFSEEEGNKG) the chain is Cytoplasmic. A helical membrane pass occupies residues 143-163 (VANVIIFLTMFLICIFNLGGF). Topologically, residues 164-460 (RLIESDFEYN…FLKNCLRPCS (297 aa)) are extracellular. Disordered stretches follow at residues 183 to 206 (ETTK…RFFS) and 227 to 324 (GTKG…SQPR). Polar residues-rich tracts occupy residues 240–260 (RRST…NSKI) and 272–312 (IACT…SSID). Residues 461–481 (MAVIIALTVAFIPWVKALFVT) form a helical membrane-spanning segment. At 482–499 (TANTPHISQAPDNAPPLS) the chain is on the cytoplasmic side. Residues 500–520 (FFMDFTGYVGAACVPFGLILL) form a helical membrane-spanning segment. The Extracellular segment spans residues 521–538 (GATLGRLKIGNLYPGFWK). The helical transmembrane segment at 539 to 559 (AAVTLVILRQCVMPIFGVLWC) threads the bilayer. The Cytoplasmic segment spans residues 560 to 574 (DRLVKAGWVNWQDDR). Residues 575-595 (MLLFVIAISWNLPTMTTLIYF) form a helical membrane-spanning segment. Over 596–614 (TASFTPPETTAPIQMECVS) the chain is Extracellular. A helical transmembrane segment spans residues 615-635 (FFLMLQYPLMVVSLPFLVSYF). The Cytoplasmic portion of the chain corresponds to 636 to 642 (LKVQMNL).

Belongs to the auxin efflux carrier (TC 2.A.69) family.

The protein resides in the membrane. This is an uncharacterized protein from Saccharomyces cerevisiae (strain ATCC 204508 / S288c) (Baker's yeast).